A 513-amino-acid chain; its full sequence is Probable cytosol aminopeptidase (513 aa).

Residues Lys-277 and Asp-282 each contribute to the Mn(2+) site. Residue Lys-289 is part of the active site. Residues Asp-300, Asp-359, and Glu-361 each contribute to the Mn(2+) site. The active site involves Arg-363.

The protein belongs to the peptidase M17 family. It depends on Mn(2+) as a cofactor.

The protein resides in the cytoplasm. It catalyses the reaction Release of an N-terminal amino acid, Xaa-|-Yaa-, in which Xaa is preferably Leu, but may be other amino acids including Pro although not Arg or Lys, and Yaa may be Pro. Amino acid amides and methyl esters are also readily hydrolyzed, but rates on arylamides are exceedingly low.. It carries out the reaction Release of an N-terminal amino acid, preferentially leucine, but not glutamic or aspartic acids.. Its function is as follows. Presumably involved in the processing and regular turnover of intracellular proteins. Catalyzes the removal of unsubstituted N-terminal amino acids from various peptides. This chain is Probable cytosol aminopeptidase, found in Mycobacterium sp. (strain JLS).